The following is a 386-amino-acid chain: Na(+)/H(+) antiporter NhaA (386 aa).

The next 11 membrane-spanning stretches (helical) occupy residues 10-30, 58-78, 94-114, 124-144, 154-174, 176-196, 199-219, 253-273, 283-303, 327-347, and 361-381; these read MGSASGILLFFFALLAIIFAN, LLHWINDGFMAVFFVLVGLEV, IFPAVAAIGGMIVPALIYYLI, GWAIPMATDIAFALGIVALLG, FLLALAIIDDLGAIVVIAVFF, EELSIQALSVAIVAIAGLITL, MKVGHLCAYLIFGLILWAAVL, ILTPWCSFFVLPLFAFANAGV, IFSTLPLGIALGLIVGKPLGV, VFAIAILCGIGFTMSMFLAGL, and LSRLGILLGSSVSAILGYLLL.

It belongs to the NhaA Na(+)/H(+) (TC 2.A.33) antiporter family.

The protein localises to the cell inner membrane. The enzyme catalyses Na(+)(in) + 2 H(+)(out) = Na(+)(out) + 2 H(+)(in). Functionally, na(+)/H(+) antiporter that extrudes sodium in exchange for external protons. The sequence is that of Na(+)/H(+) antiporter NhaA from Mannheimia succiniciproducens (strain KCTC 0769BP / MBEL55E).